We begin with the raw amino-acid sequence, 1207 residues long: Ras GTPase-activating protein gap-2 (1207 aa).

2 disordered regions span residues 1-29 and 221-316; these read MKVI…SCTK and RMSS…GSLR. Residues 40-383 enclose the PH domain; it reads PPICHGWLIV…WMENLRKTMN (344 aa). Over residues 223 to 236 the composition is skewed to low complexity; that stretch reads SSSSHNLSTRLSGS. Polar residues-rich tracts occupy residues 237-247 and 286-297; these read TQNLNQPTNAY and ASNTPSRDSSLY. The C2 domain maps to 374-490; sequence WMENLRKTMN…SSRSPVERWY (117 aa). A compositionally biased stretch (polar residues) spans 495–504; it reads SHSDSGTSRI. The segment at 495-516 is disordered; sequence SHSDSGTSRIASALGGKSSSQE. The Ras-GAP domain maps to 579-789; the sequence is NLAKEFLCDL…HRMKDFLLRI (211 aa). 4 disordered regions span residues 856–903, 923–1013, 1086–1107, and 1163–1207; these read GVFH…LGRS, FQTP…SSSS, ATGG…RASR, and LKSK…VVPN. Polar residues-rich tracts occupy residues 862-876 and 891-903; these read MVQQ…SPQQ and TPPT…LGRS. Positions 939–953 are enriched in low complexity; the sequence is TGTSSSRTSDKTTSS. Basic and acidic residues predominate over residues 955–972; the sequence is EIRDDTDSDFELREDRGR. The span at 985 to 1013 shows a compositional bias: low complexity; the sequence is ASPSSSQQASSGYLSNNPSRSSYSNSSSS. Low complexity predominate over residues 1181-1207; it reads SGASEDSYDSLSSLDRPSRQSLVVVPN.

Mainly expressed in gonads and vulval cells. Isoform c in expressed in pharyngeal epithelial cells and several rectal/blast cells in the tail region. Isoform f is weakly expressed in four cells symmetrically located in the vulval region. Isoform g is strongly expressed in the pharyngeal muscle cells m6 in addition to several cells in the tail region.

It localises to the cytoplasm. GTPase-activating protein, which acts as a negative regulator for the member of the Ras family let-60. Probably decreases the signaling activity of Ras by stimulating its intrinsic GTPase activity, thereby lowering the levels of GTP-bound, active Ras. The different isoforms may play a distinct role in specific tissues. This is Ras GTPase-activating protein gap-2 (gap-2) from Caenorhabditis elegans.